A 660-amino-acid chain; its full sequence is Bifunctional polymyxin resistance protein ArnA (660 aa).

A formyltransferase ArnAFT region spans residues 1-304 (MKAVVFAYHD…TLGLVEGSRL (304 aa)). His104 serves as the catalytic Proton donor; for formyltransferase activity. (6R)-10-formyltetrahydrofolate is bound by residues Arg114 and 136–140 (VAKAD). Residues 314–660 (RRTRVLILGV…RTVDIVEKSS (347 aa)) are dehydrogenase ArnADH. Residues Asp347 and 368–369 (DI) contribute to the NAD(+) site. UDP-alpha-D-glucuronate-binding positions include Ala393, Tyr398, and 432-433 (TS). Glu434 (proton acceptor; for decarboxylase activity) is an active-site residue. Residues Arg460, Asn492, 526–535 (KLIDGGKQKR), and Tyr613 contribute to the UDP-alpha-D-glucuronate site. Arg619 serves as the catalytic Proton donor; for decarboxylase activity.

This sequence in the N-terminal section; belongs to the Fmt family. UDP-L-Ara4N formyltransferase subfamily. It in the C-terminal section; belongs to the NAD(P)-dependent epimerase/dehydratase family. UDP-glucuronic acid decarboxylase subfamily. Homohexamer, formed by a dimer of trimers.

It catalyses the reaction UDP-alpha-D-glucuronate + NAD(+) = UDP-beta-L-threo-pentopyranos-4-ulose + CO2 + NADH. It carries out the reaction UDP-4-amino-4-deoxy-beta-L-arabinose + (6R)-10-formyltetrahydrofolate = UDP-4-deoxy-4-formamido-beta-L-arabinose + (6S)-5,6,7,8-tetrahydrofolate + H(+). The protein operates within nucleotide-sugar biosynthesis; UDP-4-deoxy-4-formamido-beta-L-arabinose biosynthesis; UDP-4-deoxy-4-formamido-beta-L-arabinose from UDP-alpha-D-glucuronate: step 1/3. It participates in nucleotide-sugar biosynthesis; UDP-4-deoxy-4-formamido-beta-L-arabinose biosynthesis; UDP-4-deoxy-4-formamido-beta-L-arabinose from UDP-alpha-D-glucuronate: step 3/3. Its pathway is bacterial outer membrane biogenesis; lipopolysaccharide biosynthesis. Bifunctional enzyme that catalyzes the oxidative decarboxylation of UDP-glucuronic acid (UDP-GlcUA) to UDP-4-keto-arabinose (UDP-Ara4O) and the addition of a formyl group to UDP-4-amino-4-deoxy-L-arabinose (UDP-L-Ara4N) to form UDP-L-4-formamido-arabinose (UDP-L-Ara4FN). The modified arabinose is attached to lipid A and is required for resistance to polymyxin and cationic antimicrobial peptides. This Escherichia fergusonii (strain ATCC 35469 / DSM 13698 / CCUG 18766 / IAM 14443 / JCM 21226 / LMG 7866 / NBRC 102419 / NCTC 12128 / CDC 0568-73) protein is Bifunctional polymyxin resistance protein ArnA.